The sequence spans 139 residues: Actin-depolymerizing factor 2 (139 aa).

The ADF-H domain maps to 7–139; the sequence is GLAVSDECKV…SLDIVKSRTN (133 aa).

The protein belongs to the actin-binding proteins ADF family. Expressed in pollen.

Its function is as follows. Actin-depolymerizing protein. Severs actin filaments (F-actin) and binds to actin monomers. In Zea mays (Maize), this protein is Actin-depolymerizing factor 2 (ADF2).